The following is a 282-amino-acid chain: MAGGGDHSQTNGGHVDQRALEEGRKEEFADQGCAAMVVSVPFIQKIIAEIFGTYFLMFAGCGAVTINASKNGQITFPGVAIVWGLAVMVMVYAVGHISGAHFNPAVTLAFATSGRFPWRQLPAYVLAQMLGATLASGTLRLMFGGRHEHFPGTLPTGSEVQSLVIEIITTFYLMFVISGVATDNRAIGELAGLAVGATILLNVLIAGPVSGASMNPARSVGPALVSGEYTSIWVYVVGPVVGAVAGAWAYNLIRFTNKPLREITKSTSFLKSTSRMNSAASA.

A run of 2 helical transmembrane segments spans residues 46-66 and 74-94; these read IIAE…AVTI and ITFP…VYAV. An NPA 1 motif is present at residues 103–105; sequence NPA. 3 consecutive transmembrane segments (helical) span residues 125 to 145, 162 to 182, and 186 to 206; these read VLAQ…MFGG, SLVI…GVAT, and AIGE…VLIA. An NPA 2 motif is present at residues 215–217; sequence NPA. A helical transmembrane segment spans residues 232–252; the sequence is IWVYVVGPVVGAVAGAWAYNL.

This sequence belongs to the MIP/aquaporin (TC 1.A.8) family. NIP (TC 1.A.8.12) subfamily.

The protein localises to the membrane. Functionally, aquaporins facilitate the transport of water and small neutral solutes across cell membranes. The protein is Aquaporin NIP1-1 (NIP1-1) of Zea mays (Maize).